The sequence spans 199 residues: Shikimate kinase (199 aa).

14–19 (GSGKST) is a binding site for ATP. Residue Ser18 coordinates Mg(2+). Residues Asp36, Arg60, and Gly82 each contribute to the substrate site. Arg120 provides a ligand contact to ATP. Arg147 provides a ligand contact to substrate. The tract at residues 179–199 (YVRRAEKNQNSHSQTKKQSRK) is disordered.

Belongs to the shikimate kinase family. Monomer. Mg(2+) is required as a cofactor.

The protein localises to the cytoplasm. It carries out the reaction shikimate + ATP = 3-phosphoshikimate + ADP + H(+). Its pathway is metabolic intermediate biosynthesis; chorismate biosynthesis; chorismate from D-erythrose 4-phosphate and phosphoenolpyruvate: step 5/7. In terms of biological role, catalyzes the specific phosphorylation of the 3-hydroxyl group of shikimic acid using ATP as a cosubstrate. This chain is Shikimate kinase, found in Chlorobium phaeobacteroides (strain BS1).